Here is a 196-residue protein sequence, read N- to C-terminus: Small ribosomal subunit protein uS4c (196 aa).

A compositionally biased stretch (basic residues) spans 1-14; sequence MSRYRGPRLKKIRR. The disordered stretch occupies residues 1-43; sequence MSRYRGPRLKKIRRLGALPGLTRKTPKSGSNPKKKFHSGKKEQ. In terms of domain architecture, S4 RNA-binding spans 89–169; it reads MRLDNILFRL…LPKHLTIDTL (81 aa).

The protein belongs to the universal ribosomal protein uS4 family. Part of the 30S ribosomal subunit. Contacts protein S5. The interaction surface between S4 and S5 is involved in control of translational fidelity.

Its subcellular location is the plastid. It localises to the chloroplast. One of the primary rRNA binding proteins, it binds directly to 16S rRNA where it nucleates assembly of the body of the 30S subunit. Functionally, with S5 and S12 plays an important role in translational accuracy. The sequence is that of Small ribosomal subunit protein uS4c (rps4) from Melica uniflora (Wood melick grass).